We begin with the raw amino-acid sequence, 190 residues long: Bifunctional D-Ala-D-Ala dipeptidase and D-Ala-D-Ala carboxypeptidase VanXYC (190 aa).

Mg(2+) is bound at residue Glu-66. A dipeptide-binding residues include Gln-67, Ala-88, Ser-93, His-95, and Asp-102. Residues His-95 and Asp-102 each contribute to the Cu(2+) site. 2 residues coordinate Zn(2+): His-95 and Asp-102. The active-site catalytic acid/base residue is Glu-153. Trp-155 and His-156 together coordinate a dipeptide. His-156 lines the Cu(2+) pocket. His-156 is a Zn(2+) binding site.

This sequence belongs to the peptidase M15D family. In terms of assembly, homodimer.

The protein localises to the cytoplasm. The catalysed reaction is D-alanyl-D-alanine + H2O = 2 D-alanine. It carries out the reaction UDP-N-acetyl-alpha-D-muramoyl-L-alanyl-gamma-D-glutamyl-L-lysyl-D-alanyl-D-alanine + H2O = UDP-N-acetyl-alpha-D-muramoyl-L-alanyl-gamma-D-glutamyl-L-lysyl-D-alanine + D-alanine. Its function is as follows. Bifunctional enzyme, exhibiting dipeptidase and carboxypeptidase activities. Catalyzes hydrolysis of the D-alanyl-D-alanine dipeptide. Cleaves the C-terminal D-alanine residue of UDP-muramyl-pentapeptide[Ala] (UDP-MurNAc-L-Ala-D-Glu-L-Lys-D-Ala-D-Ala). Shows no activity against the pentapeptide with a C-terminal D-serine residue. Together with VanC/VanC1 and VanT, required for vancomycin resistance in E.gallinarum strain BM4174. This is Bifunctional D-Ala-D-Ala dipeptidase and D-Ala-D-Ala carboxypeptidase VanXYC from Enterococcus gallinarum.